The primary structure comprises 319 residues: L-lactate dehydrogenase (319 aa).

NAD(+) is bound by residues valine 17, aspartate 38, lysine 43, tyrosine 69, and glycine 83–alanine 84. Substrate contacts are provided by residues glutamine 86, arginine 92, and asparagine 124–aspartate 127. Residues alanine 122 to asparagine 124 and serine 147 each bind NAD(+). Aspartate 152 to arginine 155 serves as a coordination point for substrate. Beta-D-fructose 1,6-bisphosphate-binding residues include arginine 157 and histidine 172. Histidine 179 functions as the Proton acceptor in the catalytic mechanism. Tyrosine 224 is modified (phosphotyrosine). Substrate is bound at residue threonine 233.

It belongs to the LDH/MDH superfamily. LDH family. As to quaternary structure, homotetramer.

It localises to the cytoplasm. It catalyses the reaction (S)-lactate + NAD(+) = pyruvate + NADH + H(+). It participates in fermentation; pyruvate fermentation to lactate; (S)-lactate from pyruvate: step 1/1. With respect to regulation, allosterically activated by fructose 1,6-bisphosphate (FBP). Catalyzes the conversion of lactate to pyruvate. This is L-lactate dehydrogenase from Bacillus licheniformis (strain ATCC 14580 / DSM 13 / JCM 2505 / CCUG 7422 / NBRC 12200 / NCIMB 9375 / NCTC 10341 / NRRL NRS-1264 / Gibson 46).